Consider the following 807-residue polypeptide: 85/88 kDa calcium-independent phospholipase A2 (807 aa).

Ser-13 is subject to Phosphoserine. 9 ANK repeats span residues 120 to 147 (WTVT…ANST), 151 to 181 (EGCT…QMDV), 185 to 215 (KGET…GLNQ), 219 to 248 (QGLT…RCNI), 251 to 281 (PGGF…QIHS), 286 to 312 (YGAS…DVDS), 316 to 345 (SGNT…NAGA), 349 to 378 (HGNT…EVDT), and 382 to 403 (FGET…KALL). Helical transmembrane passes span 481–501 (LLCL…LIAI) and 512–532 (LFDW…ILHS). The PNPLA domain maps to 482–666 (LCLDGGGVKG…LANNPTLDAM (185 aa)). Residues 486 to 491 (GGGVKG) carry the GXGXXG motif. A GXSXG motif is present at residues 518–522 (GTSTG). Residue Ser-520 is the Nucleophile of the active site. Asp-653 acts as the Proton acceptor in catalysis. Residues 653–655 (DGG) carry the DGA/G motif. Residues 678 to 687 (RKGQGNKVKK) form a calmodulin-binding (1-9-14 motif) region. The calmodulin-binding (IQ motif) stretch occupies residues 749–760 (AWCEMVGIQYFR).

Homodimer formed by catalytic domains tightly interacting through a large hydrophobic interface. The contact area involves 3 alpha helices, several loops and a part of the beta sheet from each monomer. Both active sites of the dimer are in close proximity adopting an open conformation that provide sufficient space for phospholipid access and favoring cooperativity in deacylation-reacylation reactions. Each monomer has 9 ankyrin repeats stacked side-by-side in an elongated structure oriented outwards from the catalytic core. Expressed in neurons of central and peripheral nervous system. Highly expressed in Purkinje cells in cerebellum and dorsal and ventral horn neurons in the spinal cord. Expressed in testis (at protein level). Expressed in skeletal muscle (at protein level).

It is found in the cytoplasm. Its subcellular location is the cell membrane. The protein resides in the mitochondrion. It localises to the cell projection. The protein localises to the pseudopodium. The enzyme catalyses a 1,2-diacyl-sn-glycero-3-phosphocholine + H2O = a 1-acyl-sn-glycero-3-phosphocholine + a fatty acid + H(+). It catalyses the reaction a 1-O-alkyl-2-acyl-sn-glycero-3-phosphocholine + H2O = a 1-O-alkyl-sn-glycero-3-phosphocholine + a fatty acid + H(+). It carries out the reaction 1,2-dihexadecanoyl-sn-glycero-3-phosphocholine + H2O = 1-hexadecanoyl-sn-glycero-3-phosphocholine + hexadecanoate + H(+). The catalysed reaction is 1-hexadecanoyl-2-(9Z-octadecenoyl)-sn-glycero-3-phosphocholine + H2O = 1-hexadecanoyl-sn-glycero-3-phosphocholine + (9Z)-octadecenoate + H(+). The enzyme catalyses 1-hexadecanoyl-2-(9Z,12Z-octadecadienoyl)-sn-glycero-3-phosphocholine + H2O = (9Z,12Z)-octadecadienoate + 1-hexadecanoyl-sn-glycero-3-phosphocholine + H(+). It catalyses the reaction 1-hexadecanoyl-2-(5Z,8Z,11Z,14Z-eicosatetraenoyl)-sn-glycero-3-phosphocholine + H2O = 1-hexadecanoyl-sn-glycero-3-phosphocholine + (5Z,8Z,11Z,14Z)-eicosatetraenoate + H(+). It carries out the reaction 1-octadecanoyl-2-(5Z,8Z,11Z,14Z-eicosatetraenoyl)-sn-glycero-3-phosphocholine + H2O = 1-octadecanoyl-sn-glycero-3-phosphocholine + (5Z,8Z,11Z,14Z)-eicosatetraenoate + H(+). The catalysed reaction is 1-hexadecanoyl-2-(5Z,8Z,11Z,14Z-eicosatetraenoyl)-sn-glycero-3-phosphoethanolamine + H2O = 1-hexadecanoyl-sn-glycero-3-phosphoethanolamine + (5Z,8Z,11Z,14Z)-eicosatetraenoate + H(+). The enzyme catalyses 1,2-dihexadecanoyl-sn-glycero-3-phosphate + H2O = 1-hexadecanoyl-sn-glycero-3-phosphate + hexadecanoate + H(+). It catalyses the reaction a 1-acyl-sn-glycero-3-phosphocholine + H2O = sn-glycerol 3-phosphocholine + a fatty acid + H(+). It carries out the reaction 1-hexadecanoyl-sn-glycero-3-phosphocholine + H2O = sn-glycerol 3-phosphocholine + hexadecanoate + H(+). The catalysed reaction is 1-(5Z,8Z,11Z,14Z-eicosatetraenoyl)-sn-glycero-3-phosphocholine + H2O = sn-glycerol 3-phosphocholine + (5Z,8Z,11Z,14Z)-eicosatetraenoate + H(+). The enzyme catalyses 2-(5Z,8Z,11Z,14Z)-eicosatetraenoyl-sn-glycero-3-phosphocholine + H2O = sn-glycerol 3-phosphocholine + (5Z,8Z,11Z,14Z)-eicosatetraenoate + H(+). It catalyses the reaction 1-O-hexadecyl-2-(5Z,8Z,11Z,14Z)-eicosatetraenoyl-sn-glycero-3-phosphocholine + H2O = 1-O-hexadecyl-sn-glycero-3-phosphocholine + (5Z,8Z,11Z,14Z)-eicosatetraenoate + H(+). It carries out the reaction 1-O-hexadecyl-2-acetyl-sn-glycero-3-phosphocholine + H2O = 1-O-hexadecyl-sn-glycero-3-phosphocholine + acetate + H(+). The catalysed reaction is hexadecanoyl-CoA + H2O = hexadecanoate + CoA + H(+). The enzyme catalyses 1',3'-bis[1,2-di-(9Z-octadecenoyl)-sn-glycero-3-phospho]-glycerol + H2O = 1'-[1,2-di-(9Z-octadecenoyl)-sn-glycero-3-phospho]-3'-[1-(9Z-octadecenoyl)-sn-glycero-3-phospho]-glycerol + (9Z)-octadecenoate + H(+). It catalyses the reaction 1'-[1,2-di-(9Z-octadecenoyl)-sn-glycero-3-phospho]-3'-[1-(9Z-octadecenoyl)-sn-glycero-3-phospho]-glycerol + H2O = 1',3'-bis-[1-(9Z-octadecenoyl)-sn-glycero-3-phospho]-glycerol + (9Z)-octadecenoate + H(+). It carries out the reaction 1',3'-bis-[1,2-di-(9Z,12Z-octadecadienoyl)-sn-glycero-3-phospho]-glycerol + H2O = 1'-[1,2-di-(9Z,12Z-octadecadienoyl)-sn-glycero-3-phospho]-3'-[1-(9Z,12Z-octadecadienoyl)-sn-glycero-3-phospho]-glycerol + (9Z,12Z)-octadecadienoate + H(+). The catalysed reaction is 1-octadecanoyl-2-(15-hydroxy-(5Z,8Z,11Z,13E)-eicosatetraenoyl)-sn-glycero-3-phosphoethanolamine + H2O = 1-octadecanoyl-sn-glycero-3-phosphoethanolamine + 15-hydroxy-(5Z,8Z,11Z,13E)-eicosatetraenoate + H(+). Its activity is regulated as follows. Inhibited by calcium-activated calmodulin. Activated by ATP. Inhibited by bromoenol lactone (BEL). In terms of biological role, calcium-independent phospholipase involved in phospholipid remodeling with implications in cellular membrane homeostasis, mitochondrial integrity and signal transduction. Hydrolyzes the ester bond of the fatty acyl group attached at sn-1 or sn-2 position of phospholipids (phospholipase A1 and A2 activity respectively), producing lysophospholipids that are used in deacylation-reacylation cycles. Hydrolyzes both saturated and unsaturated long fatty acyl chains in various glycerophospholipid classes such as phosphatidylcholines, phosphatidylethanolamines and phosphatidates, with a preference for hydrolysis at sn-2 position. Can further hydrolyze lysophospholipids carrying saturated fatty acyl chains (lysophospholipase activity). Upon oxidative stress, contributes to remodeling of mitochondrial phospholipids in pancreatic beta cells, in a repair mechanism to reduce oxidized lipid content. Preferentially hydrolyzes oxidized polyunsaturated fatty acyl chains from cardiolipins, yielding monolysocardiolipins that can be reacylated with unoxidized fatty acyls to regenerate native cardiolipin species. Hydrolyzes oxidized glycerophosphoethanolamines present in pancreatic islets, releasing oxidized polyunsaturated fatty acids such as hydroxyeicosatetraenoates (HETEs). Has thioesterase activity toward fatty-acyl CoA releasing CoA-SH known to facilitate fatty acid transport and beta-oxidation in mitochondria particularly in skeletal muscle. Plays a role in regulation of membrane dynamics and homeostasis. Selectively hydrolyzes sn-2 arachidonoyl group in plasmalogen phospholipids, structural components of lipid rafts and myelin. Regulates F-actin polymerization at the pseudopods, which is required for both speed and directionality of MCP1/CCL2-induced monocyte chemotaxis. Targets membrane phospholipids to produce potent lipid signaling messengers. Generates lysophosphatidate (LPA, 1-acyl-glycerol-3-phosphate), which acts via G-protein receptors in various cell types. Has phospholipase A2 activity toward platelet-activating factor (PAF, 1-O-alkyl-2-acetyl-sn-glycero-3-phosphocholine), likely playing a role in inactivation of this potent pro-inflammatory signaling lipid. In response to glucose, amplifies calcium influx in pancreatic beta cells to promote INS secretion. In Mus musculus (Mouse), this protein is 85/88 kDa calcium-independent phospholipase A2 (Pla2g6).